A 359-amino-acid polypeptide reads, in one-letter code: Ribosomal RNA small subunit methyltransferase mra1 (359 aa).

The span at 1–10 shows a compositional bias: basic residues; it reads MPTYSKRKSR. 2 disordered regions span residues 1-62 and 98-118; these read MPTY…EDEE and VKSD…VKAR. Ser12 is subject to Phosphoserine. A compositionally biased stretch (polar residues) spans 18–39; that stretch reads KTNQPKFIKRSQSSETITSGET. Thr33 carries the post-translational modification Phosphothreonine. Ser100 carries the phosphoserine modification. S-adenosyl-L-methionine is bound by residues Leu287, Gly314, 319–321, and 334–339; these read GPD and ISDYPL.

Belongs to the class IV-like SAM-binding methyltransferase superfamily. RNA methyltransferase NEP1 family. As to quaternary structure, homodimer.

It is found in the nucleus. It localises to the nucleolus. It catalyses the reaction a pseudouridine in rRNA + S-adenosyl-L-methionine = an N(1)-methylpseudouridine in rRNA + S-adenosyl-L-homocysteine + H(+). Functionally, S-adenosyl-L-methionine-dependent pseudouridine N(1)-methyltransferase that methylates the pseudouridine corresponding to position 1189 (Psi1189) in S.cerevisiae 18S rRNA. Involved the biosynthesis of the hypermodified N1-methyl-N3-(3-amino-3-carboxypropyl) pseudouridine (m1acp3-Psi) conserved in eukaryotic 18S rRNA. Also has an essential role in 40S ribosomal subunit biogenesis independent on its methyltransferase activity, facilitating the incorporation of ribosomal protein S19 during the formation of pre-ribosomes. Essential for cell growth. It also has a key role in promoting the mating function. The polypeptide is Ribosomal RNA small subunit methyltransferase mra1 (Schizosaccharomyces pombe (strain 972 / ATCC 24843) (Fission yeast)).